Reading from the N-terminus, the 175-residue chain is Thioredoxin M3, chloroplastic (175 aa).

A chloroplast-targeting transit peptide spans 1–59 (MAATATACPAPPPPRSLYRGVALAAPGRRRAGYGASSSAARRWPGCRRRWAAHRIRTVS). One can recognise a Thioredoxin domain in the interval 61 to 171 (AYSPRGAKTI…YVRAIEKSIS (111 aa)). Residues Cys-95 and Cys-98 each act as nucleophile in the active site. Cys-95 and Cys-98 are oxidised to a cystine.

It belongs to the thioredoxin family. Plant M-type subfamily.

It localises to the plastid. The protein localises to the chloroplast. Functionally, probable thiol-disulfide oxidoreductase that may be involved in the redox regulation of chloroplastic enzymes. This chain is Thioredoxin M3, chloroplastic, found in Oryza sativa subsp. japonica (Rice).